A 106-amino-acid polypeptide reads, in one-letter code: 1-deoxy-D-xylulose 5-phosphate reductoisomerase (106 aa).

A Mn(2+)-binding site is contributed by aspartate 3. Residues serine 4, glutamate 5, serine 29, histidine 52, serine 65, asparagine 70, lysine 71, and glutamate 74 each coordinate 1-deoxy-D-xylulose 5-phosphate. Position 5 (glutamate 5) interacts with Mn(2+). Glutamate 74 is a Mn(2+) binding site.

The protein belongs to the DXR family. Mn(2+) is required as a cofactor. Requires Mg(2+) as cofactor.

It is found in the plastid. The protein localises to the chloroplast stroma. The catalysed reaction is 2-C-methyl-D-erythritol 4-phosphate + NADP(+) = 1-deoxy-D-xylulose 5-phosphate + NADPH + H(+). The protein operates within isoprenoid biosynthesis; isopentenyl diphosphate biosynthesis via DXP pathway; isopentenyl diphosphate from 1-deoxy-D-xylulose 5-phosphate: step 1/6. Enzyme of the plastid non-mevalonate pathway for isoprenoid biosynthesis that catalyzes the NADPH-dependent rearrangement and reduction of 1-deoxy-D-xylulose-5-phosphate (DXP) to 2-C-methyl-D-erythritol 4-phosphate (MEP). Required for chloroplast development. The sequence is that of 1-deoxy-D-xylulose 5-phosphate reductoisomerase from Origanum vulgare (Wild marjoram).